The sequence spans 297 residues: ClpXP adapter protein SpxH (297 aa).

Belongs to the SpxH family. In terms of assembly, interacts with Spx.

It is found in the cytoplasm. Its function is as follows. Adapter protein required for efficient degradation of Spx by ClpXP under non-stress conditions. Interaction with Spx stabilizes Spx and exposes the C-terminus of Spx for recognition and proteolysis by ClpXP. This Bacillus cereus (strain ZK / E33L) protein is ClpXP adapter protein SpxH.